A 562-amino-acid chain; its full sequence is tRNA (guanine(37)-N(1))-methyltransferase (562 aa).

A mitochondrion-targeting transit peptide spans 1-41; the sequence is MLFRRFLNLTTKTPHLQTFRARHYFRNMSCPELIPPPTVRG. S-adenosyl-L-methionine contacts are provided by residues His-243, 281 to 282, and Asn-340; that span reads DL. The span at 523–534 shows a compositional bias: basic and acidic residues; the sequence is AHIVAKKPEKKP. Residues 523-562 form a disordered region; sequence AHIVAKKPEKKPLPAKPASKKNKNQANTKQVEAGLDKMQM.

This sequence belongs to the class I-like SAM-binding methyltransferase superfamily. TRM5/TYW2 family. As to quaternary structure, monomer.

Its subcellular location is the mitochondrion matrix. It is found in the nucleus. The protein resides in the cytoplasm. It catalyses the reaction guanosine(37) in tRNA + S-adenosyl-L-methionine = N(1)-methylguanosine(37) in tRNA + S-adenosyl-L-homocysteine + H(+). Functionally, specifically methylates the N1 position of guanosine-37 in various cytoplasmic and mitochondrial tRNAs. Methylation is not dependent on the nature of the nucleoside 5' of the target nucleoside. This is the first step in the biosynthesis of wybutosine (yW), a modified base adjacent to the anticodon of tRNAs and required for accurate decoding. The chain is tRNA (guanine(37)-N(1))-methyltransferase from Aedes aegypti (Yellowfever mosquito).